Here is a 477-residue protein sequence, read N- to C-terminus: Bifunctional protein HldE (477 aa).

Residues 1–319 (MKITLPPFDQ…RALQEQEQSG (319 aa)) form a ribokinase region. ATP is bound at residue 195-198 (NLAE). Asp264 is an active-site residue. The segment at 344 to 477 (MTNGCFDLLH…IERMQSAPDT (134 aa)) is cytidylyltransferase.

In the N-terminal section; belongs to the carbohydrate kinase PfkB family. The protein in the C-terminal section; belongs to the cytidylyltransferase family. Homodimer.

It catalyses the reaction D-glycero-beta-D-manno-heptose 7-phosphate + ATP = D-glycero-beta-D-manno-heptose 1,7-bisphosphate + ADP + H(+). It carries out the reaction D-glycero-beta-D-manno-heptose 1-phosphate + ATP + H(+) = ADP-D-glycero-beta-D-manno-heptose + diphosphate. The protein operates within nucleotide-sugar biosynthesis; ADP-L-glycero-beta-D-manno-heptose biosynthesis; ADP-L-glycero-beta-D-manno-heptose from D-glycero-beta-D-manno-heptose 7-phosphate: step 1/4. It participates in nucleotide-sugar biosynthesis; ADP-L-glycero-beta-D-manno-heptose biosynthesis; ADP-L-glycero-beta-D-manno-heptose from D-glycero-beta-D-manno-heptose 7-phosphate: step 3/4. Functionally, catalyzes the phosphorylation of D-glycero-D-manno-heptose 7-phosphate at the C-1 position to selectively form D-glycero-beta-D-manno-heptose-1,7-bisphosphate. Catalyzes the ADP transfer from ATP to D-glycero-beta-D-manno-heptose 1-phosphate, yielding ADP-D-glycero-beta-D-manno-heptose. The sequence is that of Bifunctional protein HldE from Alkalilimnicola ehrlichii (strain ATCC BAA-1101 / DSM 17681 / MLHE-1).